We begin with the raw amino-acid sequence, 205 residues long: MPASVTPSITGLLLAGGRATRMDGADKGLQLLDGTPLALHVLRRLAGQVDEMVISANRNADRYAELGAPFGARVVPDETLDFAGPLAGLLAGMRAARAPLVVCAPCDTPSLPTDLVARLHAAFDAHRADIAMAVTVDAQHARSPQPTFALLRTSLADDLAAALAAGERKVRAWYARHKTVEVEFRDERAFYNANSWQELAALARR.

GTP is bound by residues 14–16 (LAG), K27, D77, and D107. Residue D107 coordinates Mg(2+).

Belongs to the MobA family. As to quaternary structure, monomer. Requires Mg(2+) as cofactor.

The protein resides in the cytoplasm. The catalysed reaction is Mo-molybdopterin + GTP + H(+) = Mo-molybdopterin guanine dinucleotide + diphosphate. Functionally, transfers a GMP moiety from GTP to Mo-molybdopterin (Mo-MPT) cofactor (Moco or molybdenum cofactor) to form Mo-molybdopterin guanine dinucleotide (Mo-MGD) cofactor. The polypeptide is Molybdenum cofactor guanylyltransferase (Burkholderia vietnamiensis (strain G4 / LMG 22486) (Burkholderia cepacia (strain R1808))).